A 157-amino-acid polypeptide reads, in one-letter code: Phosphopantetheine adenylyltransferase (157 aa).

Ser8 is a substrate binding site. Residues 8 to 9 (SF) and His16 contribute to the ATP site. 3 residues coordinate substrate: Lys40, Thr72, and Arg86. ATP is bound by residues 87 to 89 (GLR), Glu97, and 122 to 128 (YSFLSSS).

It belongs to the bacterial CoaD family. Homohexamer. It depends on Mg(2+) as a cofactor.

It localises to the cytoplasm. The catalysed reaction is (R)-4'-phosphopantetheine + ATP + H(+) = 3'-dephospho-CoA + diphosphate. The protein operates within cofactor biosynthesis; coenzyme A biosynthesis; CoA from (R)-pantothenate: step 4/5. Reversibly transfers an adenylyl group from ATP to 4'-phosphopantetheine, yielding dephospho-CoA (dPCoA) and pyrophosphate. The protein is Phosphopantetheine adenylyltransferase of Gloeothece citriformis (strain PCC 7424) (Cyanothece sp. (strain PCC 7424)).